The chain runs to 241 residues: uncharacterized protein (241 aa).

A run of 6 helical transmembrane segments spans residues 1 to 21 (MMMA…GILL), 43 to 63 (FPII…LKNL), 75 to 95 (LPIY…FYAI), 108 to 128 (IYVL…VLML), 160 to 180 (VLTS…HGLL), and 200 to 220 (ILVI…IASG).

To M.jannaschii MJ0871, MJ0880 and MJ1556.

It localises to the cell membrane. This is an uncharacterized protein from Methanocaldococcus jannaschii (strain ATCC 43067 / DSM 2661 / JAL-1 / JCM 10045 / NBRC 100440) (Methanococcus jannaschii).